The following is a 444-amino-acid chain: tRNA-2-methylthio-N(6)-dimethylallyladenosine synthase (444 aa).

Positions 8-122 (KTFYIETFGC…LAEMLVQIES (115 aa)) constitute an MTTase N-terminal domain. [4Fe-4S] cluster-binding residues include C17, C53, C85, C160, C164, and C167. Residues 146–376 (RGNAHRGYIT…MEHQREIQRA (231 aa)) form the Radical SAM core domain. One can recognise a TRAM domain in the interval 379–444 (RKHIGETIEV…PNSLVGELVG (66 aa)).

This sequence belongs to the methylthiotransferase family. MiaB subfamily. In terms of assembly, monomer. [4Fe-4S] cluster serves as cofactor.

Its subcellular location is the cytoplasm. It carries out the reaction N(6)-dimethylallyladenosine(37) in tRNA + (sulfur carrier)-SH + AH2 + 2 S-adenosyl-L-methionine = 2-methylsulfanyl-N(6)-dimethylallyladenosine(37) in tRNA + (sulfur carrier)-H + 5'-deoxyadenosine + L-methionine + A + S-adenosyl-L-homocysteine + 2 H(+). In terms of biological role, catalyzes the methylthiolation of N6-(dimethylallyl)adenosine (i(6)A), leading to the formation of 2-methylthio-N6-(dimethylallyl)adenosine (ms(2)i(6)A) at position 37 in tRNAs that read codons beginning with uridine. The sequence is that of tRNA-2-methylthio-N(6)-dimethylallyladenosine synthase from Koribacter versatilis (strain Ellin345).